The sequence spans 230 residues: 7-cyano-7-deazaguanine synthase (230 aa).

Residue 9–19 coordinates ATP; that stretch reads LSGGLDSATTA. Zn(2+)-binding residues include Cys190, Cys198, Cys201, and Cys204.

This sequence belongs to the QueC family. It depends on Zn(2+) as a cofactor.

It carries out the reaction 7-carboxy-7-deazaguanine + NH4(+) + ATP = 7-cyano-7-deazaguanine + ADP + phosphate + H2O + H(+). Its pathway is purine metabolism; 7-cyano-7-deazaguanine biosynthesis. Its function is as follows. Catalyzes the ATP-dependent conversion of 7-carboxy-7-deazaguanine (CDG) to 7-cyano-7-deazaguanine (preQ(0)). This chain is 7-cyano-7-deazaguanine synthase, found in Microcystis aeruginosa (strain NIES-843 / IAM M-2473).